A 501-amino-acid chain; its full sequence is ATP synthase subunit alpha (501 aa).

Gly-169–Thr-176 is a binding site for ATP.

The protein belongs to the ATPase alpha/beta chains family. In terms of assembly, F-type ATPases have 2 components, CF(1) - the catalytic core - and CF(0) - the membrane proton channel. CF(1) has five subunits: alpha(3), beta(3), gamma(1), delta(1), epsilon(1). CF(0) has three main subunits: a(1), b(2) and c(9-12). The alpha and beta chains form an alternating ring which encloses part of the gamma chain. CF(1) is attached to CF(0) by a central stalk formed by the gamma and epsilon chains, while a peripheral stalk is formed by the delta and b chains.

Its subcellular location is the cell membrane. The enzyme catalyses ATP + H2O + 4 H(+)(in) = ADP + phosphate + 5 H(+)(out). Produces ATP from ADP in the presence of a proton gradient across the membrane. The alpha chain is a regulatory subunit. This chain is ATP synthase subunit alpha, found in Streptococcus agalactiae serotype Ia (strain ATCC 27591 / A909 / CDC SS700).